Here is a 313-residue protein sequence, read N- to C-terminus: Alpha/beta-gliadin clone PW8142 (313 aa).

Positions 1–20 (MKTFLILALVATTATTAVRV) are cleaved as a signal peptide. Residues 22–55 (VPQLQPKNPSQQQPQEQVPLVQQQQFPGQQQQFP) show a composition bias toward low complexity. 2 disordered regions span residues 22–122 (VPQL…QQAQ) and 234–272 (QQPS…VQPQ). Pro residues-rich tracts occupy residues 56-68 (PQQP…PFPS) and 78-101 (FPQP…PQQP). Composition is skewed to low complexity over residues 102 to 122 (YPQQ…QQAQ) and 234 to 264 (QQPS…QNPQ).

The protein belongs to the gliadin/glutenin family. Post-translationally, substrate of transglutaminase.

In terms of biological role, gliadin is the major seed storage protein in wheat. In Triticum aestivum (Wheat), this protein is Alpha/beta-gliadin clone PW8142.